We begin with the raw amino-acid sequence, 702 residues long: Acetylcholinesterase (702 aa).

An N-terminal signal peptide occupies residues 1–36 (MEIRGLITRLLGPCHLRHLILCSLGLYSILVQSVHC). The segment at 107–134 (HIHSTTTRRRGLTRRESSSDATDSDPLV) is disordered. Asn-187 is a glycosylation site (N-linked (GlcNAc...) asparagine). Residues Cys-195 and Cys-222 are joined by a disulfide bond. Ser-327 acts as the Acyl-ester intermediate in catalysis. The cysteines at positions 381 and 394 are disulfide-linked. Catalysis depends on charge relay system residues Glu-453 and His-567. Cys-529 and Cys-650 are disulfide-bonded. Asn-637 carries N-linked (GlcNAc...) asparagine glycosylation.

The protein belongs to the type-B carboxylesterase/lipase family.

Its subcellular location is the synapse. The protein resides in the secreted. It is found in the cell membrane. The catalysed reaction is acetylcholine + H2O = choline + acetate + H(+). Functionally, rapidly hydrolyzes choline released into the synapse. In Culex pipiens (House mosquito), this protein is Acetylcholinesterase (ACHE1).